The sequence spans 128 residues: MASEASVRLGVPPGRLWIQRPGIYEDEEGRTWVTVVVRFNPSRREWARASQGSRYEPSITVHLWQMAVHTRELLSSGQMPFSQLPAVWQLYPGRKYRAADSSFWEIADHGQIDSMEQLVLTYQPERKD.

It belongs to the TCL1 family. Interacts with AKT1 and AKT2 (via PH domain). Does not interact with AKT3. In terms of tissue distribution, expressed in a variety of tissues including placenta and testis.

Its function is as follows. Enhances the phosphorylation and activation of AKT1 and AKT2. This Homo sapiens (Human) protein is T-cell leukemia/lymphoma protein 1B (TCL1B).